Here is a 570-residue protein sequence, read N- to C-terminus: Urease subunit alpha (570 aa).

A Urease domain is found at 131–570 (GGMDSHIHFI…LPMAQRYFLF (440 aa)). His-136, His-138, and Lys-219 together coordinate Ni(2+). Lys-219 carries the N6-carboxylysine modification. A substrate-binding site is contributed by His-221. Ni(2+) contacts are provided by His-248 and His-274. The Proton donor role is filled by His-322. Residue Asp-362 participates in Ni(2+) binding.

This sequence belongs to the metallo-dependent hydrolases superfamily. Urease alpha subunit family. In terms of assembly, heterotrimer of UreA (gamma), UreB (beta) and UreC (alpha) subunits. Three heterotrimers associate to form the active enzyme. It depends on Ni cation as a cofactor. In terms of processing, carboxylation allows a single lysine to coordinate two nickel ions.

The protein resides in the cytoplasm. It carries out the reaction urea + 2 H2O + H(+) = hydrogencarbonate + 2 NH4(+). It participates in nitrogen metabolism; urea degradation; CO(2) and NH(3) from urea (urease route): step 1/1. The polypeptide is Urease subunit alpha (Rhizobium leguminosarum bv. trifolii (strain WSM2304)).